We begin with the raw amino-acid sequence, 123 residues long: Heat-labile enterotoxin IIA, B chain (123 aa).

A signal peptide spans 1-19; that stretch reads MSSKKIIGAFVLMTGILSG. Cys-33 and Cys-104 are disulfide-bonded.

As to quaternary structure, heterohexamer of one A chain and of five B chains.

Its function is as follows. The biological activity of the toxin is produced by the A chain, which activates intracellular adenyl cyclase. This is Heat-labile enterotoxin IIA, B chain from Escherichia coli.